The following is a 120-amino-acid chain: Large ribosomal subunit protein uL18 (120 aa).

A disordered region spans residues 1 to 22 (MKVDRKTATHRRHQRIRRKIAG). Residues 8–20 (ATHRRHQRIRRKI) show a composition bias toward basic residues.

Belongs to the universal ribosomal protein uL18 family. Part of the 50S ribosomal subunit; part of the 5S rRNA/L5/L18/L25 subcomplex. Contacts the 5S and 23S rRNAs.

Its function is as follows. This is one of the proteins that bind and probably mediate the attachment of the 5S RNA into the large ribosomal subunit, where it forms part of the central protuberance. This Gloeobacter violaceus (strain ATCC 29082 / PCC 7421) protein is Large ribosomal subunit protein uL18.